The sequence spans 88 residues: Mini zinc finger protein 3 (88 aa).

The ZF-HD dimerization-type; degenerate zinc-finger motif lies at tyrosine 26–glutamate 72.

Homo- and heterodimers. Interacts with ZHD3, ZHD5, ZHD6, ZHD7, ZHD8, ZHD9, ZHD10 and ZHD13. In terms of tissue distribution, mostly expressed in roots, stems and flowers, present in seedlings and leaves, and weakly observed in inflorescence and siliques.

It is found in the cytoplasm. Functionally, inhibits zinc finger homeodomain (ZHD) transcription factors by interacting with them to prevent both their nuclear localization and their DNA-binding properties. Involved in integrating signals from multiple hormones by regulating the expression of specific genes. Promotes the formation of ectopic shoot meristems on leaf margins. This chain is Mini zinc finger protein 3 (MIF3), found in Arabidopsis thaliana (Mouse-ear cress).